Here is a 310-residue protein sequence, read N- to C-terminus: MFEHVTVLKNESVIGLNIKPDGIYVDCTLGGAGHSQEIVKQLTGGGHLYAFDQDQYALSHAKETLSPYRGSFTLIESNFRYMREKLEELGVHHVDGVLFDLGVSSPQLDEDERGFSYHRDAPLDMRMNRSQSLSAYEVVNQWDFIELMKIISRYGEERFAKQIARKIEQSREKKPIRTTGELVDIIKEAIPAPARRTGGHPAKRTFQAIRIAVNDELGAFEEALEAAIDLTAPKGRICVITFHSLEDRICKEMFREASKGPDVPPGLPVIPEEYKATLKLITKKPIVPTAEEIELNNRARSAKLRIAEKQ.

Residues 32-34 (AGH), Asp52, Phe79, Asp100, and Gln107 each bind S-adenosyl-L-methionine.

The protein belongs to the methyltransferase superfamily. RsmH family.

It is found in the cytoplasm. The catalysed reaction is cytidine(1402) in 16S rRNA + S-adenosyl-L-methionine = N(4)-methylcytidine(1402) in 16S rRNA + S-adenosyl-L-homocysteine + H(+). In terms of biological role, specifically methylates the N4 position of cytidine in position 1402 (C1402) of 16S rRNA. In Halalkalibacterium halodurans (strain ATCC BAA-125 / DSM 18197 / FERM 7344 / JCM 9153 / C-125) (Bacillus halodurans), this protein is Ribosomal RNA small subunit methyltransferase H.